The following is a 1240-amino-acid chain: ABC transporter B family member 17 (1240 aa).

Residues 35 to 324 (MALGLIGAVG…SLSNLKYFSE (290 aa)) form the ABC transmembrane type-1 1 domain. Residues 36-56 (ALGLIGAVGDGFITPVVVFIF) form a helical membrane-spanning segment. Asn70 carries an N-linked (GlcNAc...) asparagine glycan. 5 consecutive transmembrane segments (helical) span residues 81–101 (VVAL…EGYC), 158–180 (LPNF…ILMW), 184–206 (IVGF…ALVS), 264–284 (GITI…TWYG), and 296–316 (GTVF…GQSL). The ABC transporter 1 domain occupies 359-595 (VEFNHVKFTY…IDGQYTSLVS (237 aa)). Residue 394 to 401 (GGSGSGKS) coordinates ATP. Residues Asn542, Asn609, and Asn642 are each glycosylated (N-linked (GlcNAc...) asparagine). The 289-residue stretch at 672-960 (ALYGCLSAAL…AGTMTTDLAR (289 aa)) folds into the ABC transmembrane type-1 2 domain. A run of 2 helical transmembrane segments spans residues 681 to 701 (LVGV…SVFF) and 714 to 734 (IYVL…ISQH). N-linked (GlcNAc...) asparagine glycosylation occurs at Asn769. 4 consecutive transmembrane segments (helical) span residues 793 to 815 (MSLL…VIAW), 817 to 839 (LAIV…RVLL), 896 to 919 (WLAG…NFWY), and 923 to 943 (LIAD…IFVT). The ABC transporter 2 domain occupies 995-1233 (ITFLNVDFAY…GPTGTYFSLA (239 aa)). Asn1015 carries N-linked (GlcNAc...) asparagine glycosylation. ATP is bound at residue 1030–1037 (GTSGSGKS).

It belongs to the ABC transporter superfamily. ABCB family. Multidrug resistance exporter (TC 3.A.1.201) subfamily.

The protein resides in the membrane. The sequence is that of ABC transporter B family member 17 (ABCB17) from Arabidopsis thaliana (Mouse-ear cress).